The chain runs to 170 residues: Centrin-2 (170 aa).

Positions 1 to 21 (MQRGALRGASPTARRRLVDRP) are disordered. EF-hand domains are found at residues 26-61 (DEIE…LGFE), 62-97 (TKNP…KLGD), 99-134 (ESRE…LGET), and 135-170 (MSED…KTFP). The Ca(2+) site is built by Asp39, Asp41, Ser43, Met45, and Glu50.

Belongs to the centrin family. As to quaternary structure, monomer. Does not homooligomerize.

The protein resides in the cytoplasm. Its subcellular location is the cytoskeleton. The protein localises to the microtubule organizing center. It localises to the centrosome. Functionally, in tachyzoites, plays an essential role in microneme secretion that ensures parasite motility and attachment to, invasion of and egress from host cells. Also involved in the architecture of the peripheral annuli where it appears to regulate the localization of PAP2. In association with the myosin motor MyoJ, involved in the constriction of the basal complex at the end of daughter cell division in an actin-dependent manner; the basal complex is a cytoskeletal structure formed at the tachyzoite basal pole during daughter cell formation. May be involved in parasite replication. The sequence is that of Centrin-2 from Toxoplasma gondii (strain ATCC 50611 / Me49).